Consider the following 502-residue polypeptide: MSISMLQDAQTRTLAAALAGIKQEDVHLDRSMSLSPPMSANTSATSAAAIYPAMGLQQAAAASAFGMLSPTQLLAANRQAAAFMAQLPMSTLANTLFPHNPAALFGAWAAQQSLPPQGTHLHSPPASPHSPLSTPLGSGKHPLNSPNSTPQHHEPAKKARKLSVKKEFQTEISMSVNDMYHTSGGPISPPSSGSSPNSTHDGAGGNAGCVGVSKDPSRDKSFTCKICSRSFGYKHVLQNHERTHTGEKPFECPECHKRFTRDHHLKTHMRLHTGEKPYHCSHCDRQFVQVANLRRHLRVHTGERPYTCEICDGKFSDSNQLKSHMLVHNGEKPFECERCHMKFRRRHHLMNHKCGIQSPPTPALSPAMSGDYPVAISAIAIEASTNRFAAMCATYGGSNESVDMEKATPEDDGPLDLSEDGASSVDGHCSNIARRKAQDIRRVFRLPPPQIPHVPSDMPEQTEPEDLSMHSPRSIGSHEQTDDIDLYDLDDAPASYMGHQQH.

Disordered regions lie at residues 115-164 and 178-202; these read PPQG…KLSV and DMYHTSGGPISPPSSGSSPNSTHDG. 2 stretches are compositionally biased toward low complexity: residues 119-136 and 183-198; these read THLHSPPASPHSPLSTPL and SGGPISPPSSGSSPNS. 5 consecutive C2H2-type zinc fingers follow at residues 222–244, 250–272, 278–300, 306–328, and 334–354; these read FTCKICSRSFGYKHVLQNHERTH, FECPECHKRFTRDHHLKTHMRLH, YHCSHCDRQFVQVANLRRHLRVH, YTCEICDGKFSDSNQLKSHMLVH, and FECERCHMKFRRRHHLMNHKC. 2 disordered regions span residues 399 to 427 and 445 to 502; these read NESVDMEKATPEDDGPLDLSEDGASSVDG and RLPP…HQQH. Residues 410-419 show a composition bias toward acidic residues; sequence EDDGPLDLSE. A phosphoserine mark is found at S468, S471, and S477. A compositionally biased stretch (acidic residues) spans 482–491; that stretch reads DDIDLYDLDD.

The protein belongs to the krueppel C2H2-type zinc-finger protein family.

Its subcellular location is the nucleus. In terms of biological role, krueppel is a gap class segmentation protein. It is involved in the segmentation of the embryo and in the differentiation of the Malpighian tubules. The chain is Protein krueppel (Kr) from Drosophila melanogaster (Fruit fly).